The primary structure comprises 402 residues: Acetate kinase (402 aa).

Asn7 is a binding site for Mg(2+). Position 14 (Lys14) interacts with ATP. A substrate-binding site is contributed by Arg95. The active-site Proton donor/acceptor is the Asp152. Residues 212-216, 286-288, and 334-338 each bind ATP; these read HLGNG, DMR, and GIGEN. Glu388 contributes to the Mg(2+) binding site.

Belongs to the acetokinase family. As to quaternary structure, homodimer. Mg(2+) serves as cofactor. The cofactor is Mn(2+).

It localises to the cytoplasm. It carries out the reaction acetate + ATP = acetyl phosphate + ADP. The protein operates within metabolic intermediate biosynthesis; acetyl-CoA biosynthesis; acetyl-CoA from acetate: step 1/2. Functionally, catalyzes the formation of acetyl phosphate from acetate and ATP. Can also catalyze the reverse reaction. This chain is Acetate kinase, found in Nitratidesulfovibrio vulgaris (strain DP4) (Desulfovibrio vulgaris).